We begin with the raw amino-acid sequence, 459 residues long: MIKVRFAPSPTGYIHIGNIRIALFNWLYAQAHNGAFILRYDDTDVERSKQEYIDAIAADLEWLDIQPDEIYYQSKRFNRYDEVAEMLKQRGLLYPCYETAEELDRRRKIQLSRKLPPVYDRAALKLTPEEKEEFESQGRKPHWRFLLPNFENNPLQTKRTEVCWNDVVKGKQTIDLASLSDPVLIREGGSYLYTLPSVVDDIDMAITHIIRGDDHITNTGVQIALFEALNAQLPIFGHINLLTTVLGKGLSKRDNDLSIHSLRAEGFESIAIQCFAVLIGTSQNVHPYPHQAALLKHFNLQDTSRSVTKFDIADLFALNSHLVHDLTYEEVKTRLKNLSIDGEKAECFWNAIRSNIDKVNDAVLWWKMIHDEQSFDPVALEDRSFVRQSLNFLPEGPLNDESWKVWTTTLKEKTGRRGKALFMPLRQALTGMDHGPEMGKLLQLLGREKVIDRLTIQGE.

A 'HIGH' region motif is present at residues 8-18; it reads PSPTGYIHIGN. The 'KMSKS' region signature appears at 249–253; it reads GLSKR. Position 252 (K252) interacts with ATP.

Belongs to the class-I aminoacyl-tRNA synthetase family. Glutamate--tRNA ligase type 1 subfamily. As to quaternary structure, monomer.

Its subcellular location is the cytoplasm. The catalysed reaction is tRNA(Glu) + L-glutamate + ATP = L-glutamyl-tRNA(Glu) + AMP + diphosphate. Catalyzes the attachment of glutamate to tRNA(Glu) in a two-step reaction: glutamate is first activated by ATP to form Glu-AMP and then transferred to the acceptor end of tRNA(Glu). This Bartonella quintana (strain Toulouse) (Rochalimaea quintana) protein is Glutamate--tRNA ligase 1.